The primary structure comprises 478 residues: Sedoheptulokinase (478 aa).

It belongs to the FGGY kinase family. In terms of tissue distribution, strongly expressed in liver, kidney and pancreas. Expressed at lower levels in placenta and heart. Very weakly expressed in lung and brain.

It is found in the cytoplasm. The catalysed reaction is sedoheptulose + ATP = D-sedoheptulose 7-phosphate + ADP + H(+). Acts as a modulator of macrophage activation through control of glucose metabolism. This Homo sapiens (Human) protein is Sedoheptulokinase.